The sequence spans 645 residues: Crossover junction endonuclease mus-81 (645 aa).

Disordered regions lie at residues 98 to 119 (LAAA…RTAR) and 219 to 310 (GVAG…EDRK). Residues 223–252 (SANTSRNAIASGSGTSNPNRSENVNPNRQD) are compositionally biased toward polar residues. Positions 296-305 (DSDDEDPKYD) are enriched in acidic residues. The region spanning 353 to 459 (ELVLDTREVQ…NVVYIIENYN (107 aa)) is the ERCC4 domain.

This sequence belongs to the XPF family. As to quaternary structure, interacts with eme-1. Requires Mg(2+) as cofactor.

It is found in the nucleus. Functionally, interacts with eme-1 to form a DNA structure-specific endonuclease with substrate preference for branched DNA structures with a 5'-end at the branch nick. Typical substrates include 3'-flap structures, D-loops, replication forks and nicked Holliday junctions. May be required in mitosis for the processing of stalled or collapsed replication fork intermediates. May be required in meiosis for the repair of meiosis-specific double strand breaks subsequent to single-end invasion (SEI). In Neurospora crassa (strain ATCC 24698 / 74-OR23-1A / CBS 708.71 / DSM 1257 / FGSC 987), this protein is Crossover junction endonuclease mus-81 (mus-81).